Consider the following 642-residue polypeptide: Threonine--tRNA ligase (642 aa).

In terms of domain architecture, TGS spans 1–61 (MPVITLPDGS…ENDTQLSIIT (61 aa)). The interval 243 to 534 (DHRKIGKQLD…LTEEFAGFFP (292 aa)) is catalytic. Lys286 bears the N6-acetyllysine mark. 3 residues coordinate Zn(2+): Cys334, His385, and His511.

This sequence belongs to the class-II aminoacyl-tRNA synthetase family. As to quaternary structure, homodimer. Requires Zn(2+) as cofactor.

It localises to the cytoplasm. It catalyses the reaction tRNA(Thr) + L-threonine + ATP = L-threonyl-tRNA(Thr) + AMP + diphosphate + H(+). Catalyzes the attachment of threonine to tRNA(Thr) in a two-step reaction: L-threonine is first activated by ATP to form Thr-AMP and then transferred to the acceptor end of tRNA(Thr). Also edits incorrectly charged L-seryl-tRNA(Thr). The sequence is that of Threonine--tRNA ligase from Shigella dysenteriae serotype 1 (strain Sd197).